A 208-amino-acid polypeptide reads, in one-letter code: MARYTGSLCRLCRRESMKMFLKGTRCYTEKCAFERRKYPPGQHGHNRGKLSDYGLQLREKQKVKRIYGVMERQFKNYFEKATKMKGVTGENLLKLLERRLDNVIYRMGFAMNRRQARQLVRHGYFTVNGKKVDIPSYLVRPGDIIEIVQSGKELEIIKESLALAEQRGFPVWLEVNAEEMKGKFVRLPEREEMQLPVQEQLIVEFYSK.

Positions 98–161 (RRLDNVIYRM…KELEIIKESL (64 aa)) constitute an S4 RNA-binding domain.

The protein belongs to the universal ribosomal protein uS4 family. In terms of assembly, part of the 30S ribosomal subunit. Contacts protein S5. The interaction surface between S4 and S5 is involved in control of translational fidelity.

Its function is as follows. One of the primary rRNA binding proteins, it binds directly to 16S rRNA where it nucleates assembly of the body of the 30S subunit. In terms of biological role, with S5 and S12 plays an important role in translational accuracy. The protein is Small ribosomal subunit protein uS4 of Thermodesulfovibrio yellowstonii (strain ATCC 51303 / DSM 11347 / YP87).